The primary structure comprises 356 residues: Branched-chain-amino-acid aminotransferase 6 (356 aa).

Position 199 is an N6-(pyridoxal phosphate)lysine (Lys199).

Belongs to the class-IV pyridoxal-phosphate-dependent aminotransferase family. Requires pyridoxal 5'-phosphate as cofactor.

It is found in the cytoplasm. It catalyses the reaction L-leucine + 2-oxoglutarate = 4-methyl-2-oxopentanoate + L-glutamate. The enzyme catalyses L-isoleucine + 2-oxoglutarate = (S)-3-methyl-2-oxopentanoate + L-glutamate. The catalysed reaction is L-valine + 2-oxoglutarate = 3-methyl-2-oxobutanoate + L-glutamate. Its pathway is amino-acid biosynthesis; L-isoleucine biosynthesis; L-isoleucine from 2-oxobutanoate: step 4/4. The protein operates within amino-acid biosynthesis; L-leucine biosynthesis; L-leucine from 3-methyl-2-oxobutanoate: step 4/4. It participates in amino-acid biosynthesis; L-valine biosynthesis; L-valine from pyruvate: step 4/4. In terms of biological role, converts 2-oxo acids to branched-chain amino acids. Acts on leucine, isoleucine and valine. In Arabidopsis thaliana (Mouse-ear cress), this protein is Branched-chain-amino-acid aminotransferase 6 (BCAT6).